The chain runs to 273 residues: MADHMMAMNHGRFPDGTNGLHHHPAHRMGMGQFPSPHHHQQQQPQHAFNALMGEHIHYGAGTMNATSGIRHAMGPGTVNGGHPPSALAPAARFNNSQFMAPPVASQGGSLPASMQLQKLNNQYFNHHPYPHNHYMPDLHPAAGHQMNGTNQHFRDCNPKHSGGSSTPGGSGGSSTPGGSGGSAGGGAGSSNSGGGSGGSGSSNMPASVAHVPAAMLPPNVIDTDFIDEEVLMSLVIXMGLDRIKELPELWLGQNEFDFMTDFVCKQQPSRVSC.

A disordered region spans residues 137-204 (DLHPAAGHQM…GSGGSGSSNM (68 aa)). Gly residues predominate over residues 165-200 (STPGGSGGSSTPGGSGGSAGGGAGSSNSGGGSGGSG).

This sequence belongs to the CITED family. In terms of assembly, interacts (via C-terminus) with SMAD2. Interacts (via C-terminus) with SMAD3 (via MH2 domain). Interacts with LHX2 (via LIM domains). Interacts with WT1. Interacts (via C-terminus) with EP300 (via CH1 domain); the interaction is stimulated in response to hypoxia. Interacts with PPARA. Interacts (via C-terminus) with TFAP2A, TFAP2B and TFAP2C.

It is found in the nucleus. Functionally, transcriptional coactivator of the p300/CBP-mediated transcription complex. Acts as a bridge, linking TFAP2 transcription factors and the p300/CBP transcriptional coactivator complex in order to stimulate TFAP2-mediated transcriptional activation. Positively regulates TGF-beta signaling through its association with the SMAD/p300/CBP-mediated transcriptional coactivator complex. Stimulates the peroxisome proliferator-activated receptors PPARA transcriptional activity. Enhances estrogen-dependent transactivation mediated by estrogen receptors. Also acts as a transcriptional corepressor; interferes with the binding of the transcription factors HIF1A or STAT2 and the p300/CBP transcriptional coactivator complex. Participates in sex determination and early gonad development by stimulating transcription activation of SRY. Plays a role in controlling left-right patterning during embryogenesis; potentiates transcriptional activation of NODAL-mediated gene transcription in the left lateral plate mesoderm (LPM). Plays an essential role in differentiation of the adrenal cortex from the adrenogonadal primordium (AGP); stimulates WT1-mediated transcription activation thereby up-regulating the nuclear hormone receptor NR5A1 promoter activity. Associates with chromatin to the PITX2 P1 promoter region. The polypeptide is Cbp/p300-interacting transactivator 2 (CITED2) (Saguinus labiatus (Red-chested mustached tamarin)).